Consider the following 286-residue polypeptide: NAD kinase (286 aa).

Catalysis depends on aspartate 74, which acts as the Proton acceptor. NAD(+)-binding positions include 74–75, 148–149, aspartate 178, alanine 186, 189–194, and glutamine 244; these read DG, ND, and TAYNLS.

This sequence belongs to the NAD kinase family. The cofactor is a divalent metal cation.

It is found in the cytoplasm. The enzyme catalyses NAD(+) + ATP = ADP + NADP(+) + H(+). In terms of biological role, involved in the regulation of the intracellular balance of NAD and NADP, and is a key enzyme in the biosynthesis of NADP. Catalyzes specifically the phosphorylation on 2'-hydroxyl of the adenosine moiety of NAD to yield NADP. In Campylobacter jejuni subsp. doylei (strain ATCC BAA-1458 / RM4099 / 269.97), this protein is NAD kinase.